The following is a 192-amino-acid chain: Ubiquitin-conjugating enzyme E2 27 (192 aa).

A UBC core domain is found at 2–150; sequence IDFSRIQKEL…ARYWTETFAK (149 aa). Cysteine 88 (glycyl thioester intermediate) is an active-site residue. Positions 153–192 constitute a UBA domain; the sequence is SLEEKVKRLVEMGFGDAQVRSAIESSGGDENLALEKLCSA.

It belongs to the ubiquitin-conjugating enzyme family. Expressed in seeds, pistils, siliques, hypocotyls and leaves.

The catalysed reaction is S-ubiquitinyl-[E1 ubiquitin-activating enzyme]-L-cysteine + [E2 ubiquitin-conjugating enzyme]-L-cysteine = [E1 ubiquitin-activating enzyme]-L-cysteine + S-ubiquitinyl-[E2 ubiquitin-conjugating enzyme]-L-cysteine.. It participates in protein modification; protein ubiquitination. In terms of biological role, accepts the ubiquitin from the E1 complex and catalyzes its covalent attachment to other proteins. The polypeptide is Ubiquitin-conjugating enzyme E2 27 (UBC27) (Arabidopsis thaliana (Mouse-ear cress)).